We begin with the raw amino-acid sequence, 450 residues long: WD repeat-containing protein ATCSA-1 (450 aa).

WD repeat units lie at residues 41–81 (PHRG…DYEA), 101–141 (GHKY…AVVD), 148–185 (VYRT…FSHT), and 188–228 (GHRD…CFRV). Residues 269 to 298 (LQSKQTGSQSVKGSSSAKASVEKSRQKRIH) are disordered. Low complexity predominate over residues 271–287 (SKQTGSQSVKGSSSAKA). WD repeat units follow at residues 310-349 (AHYG…NTLV) and 397-436 (GHYE…EDEM).

Interacts with DDB1A. As to expression, expressed in roots, leaves, stems, flowers and siliques.

The protein resides in the nucleus. Involved in UV-B tolerance and genome integrity. In association with DDB2, is necessary for repair of UV-B-induced DNA lesions. The protein is WD repeat-containing protein ATCSA-1 of Arabidopsis thaliana (Mouse-ear cress).